Consider the following 307-residue polypeptide: Thymidylate synthase (307 aa).

DUMP-binding positions include arginine 26 and arginine 160 to arginine 161. Cysteine 180 serves as the catalytic Nucleophile. Residues arginine 209–aspartate 212, asparagine 220, and histidine 250–tyrosine 252 each bind dUMP. Aspartate 212 contributes to the (6R)-5,10-methylene-5,6,7,8-tetrahydrofolate binding site. Alanine 306 provides a ligand contact to (6R)-5,10-methylene-5,6,7,8-tetrahydrofolate.

The protein belongs to the thymidylate synthase family. Bacterial-type ThyA subfamily. Homodimer.

It is found in the cytoplasm. The catalysed reaction is dUMP + (6R)-5,10-methylene-5,6,7,8-tetrahydrofolate = 7,8-dihydrofolate + dTMP. Its pathway is pyrimidine metabolism; dTTP biosynthesis. Functionally, catalyzes the reductive methylation of 2'-deoxyuridine-5'-monophosphate (dUMP) to 2'-deoxythymidine-5'-monophosphate (dTMP) while utilizing 5,10-methylenetetrahydrofolate (mTHF) as the methyl donor and reductant in the reaction, yielding dihydrofolate (DHF) as a by-product. This enzymatic reaction provides an intracellular de novo source of dTMP, an essential precursor for DNA biosynthesis. The sequence is that of Thymidylate synthase from Rhizobium rhizogenes (strain K84 / ATCC BAA-868) (Agrobacterium radiobacter).